We begin with the raw amino-acid sequence, 286 residues long: Probable ketoamine kinase YniA (286 aa).

Position 91–93 (91–93 (DYL)) interacts with ATP. Asp-193 acts as the Proton acceptor in catalysis.

Belongs to the fructosamine kinase family.

In terms of biological role, ketoamine kinase that phosphorylates ketoamines on the third carbon of the sugar moiety to generate ketoamine 3-phosphate. The sequence is that of Probable ketoamine kinase YniA (yniA) from Escherichia coli O157:H7.